We begin with the raw amino-acid sequence, 807 residues long: Carbamoyltransferase HypF2 (807 aa).

The 88-residue stretch at 14 to 101 folds into the Acylphosphatase-like domain; sequence RIRIRVRGVV…VDADGFAILE (88 aa). 2 consecutive C4-type zinc fingers follow at residues 120–145 and 170–195; these read CPDC…CTQC and CRPC…CPDC. Residues 212 to 415 enclose the YrdC-like domain; it reads VDPIAETVAR…HVQFIRRARG (204 aa). Residues 663 to 682 are disordered; sequence WGEQPSPGRPKTVAHSLGGV.

The protein belongs to the carbamoyltransferase HypF family.

It catalyses the reaction C-terminal L-cysteinyl-[HypE protein] + carbamoyl phosphate + ATP + H2O = C-terminal S-carboxamide-L-cysteinyl-[HypE protein] + AMP + phosphate + diphosphate + H(+). It participates in protein modification; [NiFe] hydrogenase maturation. Functionally, involved in the maturation of [NiFe] hydrogenases. Along with HypE, it catalyzes the synthesis of the CN ligands of the active site iron of [NiFe]-hydrogenases. HypF functions as a carbamoyl transferase using carbamoylphosphate as a substrate and transferring the carboxamido moiety in an ATP-dependent reaction to the thiolate of the C-terminal cysteine of HypE yielding a protein-S-carboxamide. The polypeptide is Carbamoyltransferase HypF2 (hypF2) (Cupriavidus necator (strain ATCC 17699 / DSM 428 / KCTC 22496 / NCIMB 10442 / H16 / Stanier 337) (Ralstonia eutropha)).